Consider the following 420-residue polypeptide: ATP phosphoribosyltransferase regulatory subunit (420 aa).

The protein belongs to the class-II aminoacyl-tRNA synthetase family. HisZ subfamily. In terms of assembly, heteromultimer composed of HisG and HisZ subunits.

It localises to the cytoplasm. It participates in amino-acid biosynthesis; L-histidine biosynthesis; L-histidine from 5-phospho-alpha-D-ribose 1-diphosphate: step 1/9. Required for the first step of histidine biosynthesis. May allow the feedback regulation of ATP phosphoribosyltransferase activity by histidine. This chain is ATP phosphoribosyltransferase regulatory subunit, found in Bacillus cereus (strain AH820).